Here is a 48-residue protein sequence, read N- to C-terminus: Large ribosomal subunit protein bL36c (48 aa).

It belongs to the bacterial ribosomal protein bL36 family.

The protein localises to the plastid. The protein resides in the chloroplast. This is Large ribosomal subunit protein bL36c (rpl36) from Guillardia theta (Cryptophyte).